The sequence spans 414 residues: Tryptophan synthase beta chain (414 aa).

The span at 1–12 shows a compositional bias: basic and acidic residues; the sequence is MVSTISRHDQNK. Residues 1-23 are disordered; that stretch reads MVSTISRHDQNKNNDYLNQPSKE. Position 109 is an N6-(pyridoxal phosphate)lysine (K109).

It belongs to the TrpB family. In terms of assembly, tetramer of two alpha and two beta chains. Pyridoxal 5'-phosphate serves as cofactor.

The enzyme catalyses (1S,2R)-1-C-(indol-3-yl)glycerol 3-phosphate + L-serine = D-glyceraldehyde 3-phosphate + L-tryptophan + H2O. Its pathway is amino-acid biosynthesis; L-tryptophan biosynthesis; L-tryptophan from chorismate: step 5/5. In terms of biological role, the beta subunit is responsible for the synthesis of L-tryptophan from indole and L-serine. This chain is Tryptophan synthase beta chain, found in Prochlorococcus marinus (strain MIT 9515).